A 387-amino-acid chain; its full sequence is Alpha-maltose-1-phosphate synthase (387 aa).

The protein belongs to the glycosyltransferase group 1 family.

The catalysed reaction is ADP-alpha-D-glucose + alpha-D-glucose 1-phosphate = alpha-maltose 1-phosphate + ADP + H(+). It participates in capsule biogenesis; capsule polysaccharide biosynthesis. Its pathway is glycan biosynthesis; glycogen biosynthesis. Functionally, involved in the biosynthesis of the maltose-1-phosphate (M1P) building block required for alpha-glucan production by the key enzyme GlgE. Catalyzes the formation of an alpha-1,4 linkage between glucose from ADP-glucose and glucose 1-phosphate (G1P) to yield maltose-1-phosphate (M1P). This chain is Alpha-maltose-1-phosphate synthase, found in Mycobacterium tuberculosis (strain CDC 1551 / Oshkosh).